The sequence spans 292 residues: Protease HtpX homolog (292 aa).

Transmembrane regions (helical) follow at residues 4-24 and 42-62; these read IFLF…TLRL and ALLV…LAMS. Residue His147 participates in Zn(2+) binding. The active site involves Glu148. His151 is a binding site for Zn(2+). A run of 2 helical transmembrane segments spans residues 158-178 and 198-218; these read VTLA…SRII and FVTS…IVMW. Glu224 provides a ligand contact to Zn(2+).

This sequence belongs to the peptidase M48B family. Zn(2+) serves as cofactor.

Its subcellular location is the cell inner membrane. The protein is Protease HtpX homolog of Nitrosomonas eutropha (strain DSM 101675 / C91 / Nm57).